The following is a 601-amino-acid chain: Glutamine--fructose-6-phosphate aminotransferase [isomerizing] (601 aa).

Catalysis depends on Cys-2, which acts as the Nucleophile; for GATase activity. In terms of domain architecture, Glutamine amidotransferase type-2 spans 2–218 (CGIVGYIGYD…DHEIVIVKKD (217 aa)). 2 consecutive SIS domains span residues 284-423 (IIND…EHGR) and 453-591 (IATD…VDKP). Lys-596 (for Fru-6P isomerization activity) is an active-site residue.

Homodimer.

Its subcellular location is the cytoplasm. It catalyses the reaction D-fructose 6-phosphate + L-glutamine = D-glucosamine 6-phosphate + L-glutamate. Functionally, catalyzes the first step in hexosamine metabolism, converting fructose-6P into glucosamine-6P using glutamine as a nitrogen source. In Staphylococcus aureus (strain COL), this protein is Glutamine--fructose-6-phosphate aminotransferase [isomerizing].